A 359-amino-acid polypeptide reads, in one-letter code: UDP-N-acetylglucosamine--N-acetylmuramyl-(pentapeptide) pyrophosphoryl-undecaprenol N-acetylglucosamine transferase (359 aa).

Residues 14-16, Asn-126, Arg-166, Ser-194, Ile-248, and Gln-293 each bind UDP-N-acetyl-alpha-D-glucosamine; that span reads TGG.

Belongs to the glycosyltransferase 28 family. MurG subfamily.

The protein localises to the cell inner membrane. It carries out the reaction di-trans,octa-cis-undecaprenyl diphospho-N-acetyl-alpha-D-muramoyl-L-alanyl-D-glutamyl-meso-2,6-diaminopimeloyl-D-alanyl-D-alanine + UDP-N-acetyl-alpha-D-glucosamine = di-trans,octa-cis-undecaprenyl diphospho-[N-acetyl-alpha-D-glucosaminyl-(1-&gt;4)]-N-acetyl-alpha-D-muramoyl-L-alanyl-D-glutamyl-meso-2,6-diaminopimeloyl-D-alanyl-D-alanine + UDP + H(+). The protein operates within cell wall biogenesis; peptidoglycan biosynthesis. Cell wall formation. Catalyzes the transfer of a GlcNAc subunit on undecaprenyl-pyrophosphoryl-MurNAc-pentapeptide (lipid intermediate I) to form undecaprenyl-pyrophosphoryl-MurNAc-(pentapeptide)GlcNAc (lipid intermediate II). The sequence is that of UDP-N-acetylglucosamine--N-acetylmuramyl-(pentapeptide) pyrophosphoryl-undecaprenol N-acetylglucosamine transferase from Verminephrobacter eiseniae (strain EF01-2).